A 230-amino-acid chain; its full sequence is Small ribosomal subunit protein uS3 (230 aa).

Residues 39–107 (IRKFLTEKLK…PAQINISEVR (69 aa)) enclose the KH type-2 domain.

Belongs to the universal ribosomal protein uS3 family. As to quaternary structure, part of the 30S ribosomal subunit. Forms a tight complex with proteins S10 and S14.

Binds the lower part of the 30S subunit head. Binds mRNA in the 70S ribosome, positioning it for translation. The chain is Small ribosomal subunit protein uS3 from Psychromonas ingrahamii (strain DSM 17664 / CCUG 51855 / 37).